The sequence spans 633 residues: Threonine--tRNA ligase (633 aa).

The TGS domain occupies 1–61; the sequence is MPAIRLPDGS…DHDVDLAIVT (61 aa). The segment at 242-533 is catalytic; sequence DHRKLGRQLD…LIEHHAGAMP (292 aa). 3 residues coordinate Zn(2+): cysteine 333, histidine 384, and histidine 510.

It belongs to the class-II aminoacyl-tRNA synthetase family. Homodimer. The cofactor is Zn(2+).

It localises to the cytoplasm. The catalysed reaction is tRNA(Thr) + L-threonine + ATP = L-threonyl-tRNA(Thr) + AMP + diphosphate + H(+). In terms of biological role, catalyzes the attachment of threonine to tRNA(Thr) in a two-step reaction: L-threonine is first activated by ATP to form Thr-AMP and then transferred to the acceptor end of tRNA(Thr). Also edits incorrectly charged L-seryl-tRNA(Thr). This is Threonine--tRNA ligase from Laribacter hongkongensis (strain HLHK9).